Reading from the N-terminus, the 182-residue chain is Protein GrpE (182 aa).

Positions 1 to 17 (MEEKKRCEESEKIKEQE) are enriched in basic and acidic residues. The segment at 1–33 (MEEKKRCEESEKIKEQENETLPNEDSPSMGKKV) is disordered.

This sequence belongs to the GrpE family. In terms of assembly, homodimer.

Its subcellular location is the cytoplasm. Participates actively in the response to hyperosmotic and heat shock by preventing the aggregation of stress-denatured proteins, in association with DnaK and GrpE. It is the nucleotide exchange factor for DnaK and may function as a thermosensor. Unfolded proteins bind initially to DnaJ; upon interaction with the DnaJ-bound protein, DnaK hydrolyzes its bound ATP, resulting in the formation of a stable complex. GrpE releases ADP from DnaK; ATP binding to DnaK triggers the release of the substrate protein, thus completing the reaction cycle. Several rounds of ATP-dependent interactions between DnaJ, DnaK and GrpE are required for fully efficient folding. The chain is Protein GrpE from Borrelia hermsii (strain HS1 / DAH).